Reading from the N-terminus, the 180-residue chain is Inner membrane-spanning protein YciB (180 aa).

6 helical membrane-spanning segments follow: residues 4 to 24 (LLSE…GGGI), 25 to 45 (QSAT…CYII), 52 to 72 (LSII…ISGD), 76 to 96 (IKIK…TSGI), 118 to 138 (ITLS…NEIV), and 150 to 170 (FKVF…LPLL).

This sequence belongs to the YciB family.

It localises to the cell inner membrane. Functionally, plays a role in cell envelope biogenesis, maintenance of cell envelope integrity and membrane homeostasis. In Rickettsia bellii (strain RML369-C), this protein is Inner membrane-spanning protein YciB.